The primary structure comprises 213 residues: Charged multivesicular body protein 2b (213 aa).

An N-acetylalanine modification is found at A2. Positions 25 to 55 form a coiled coil; sequence QRAIIRDRAALEKQEKQLELEIKKMAKIGNK. Positions 179 to 194 are enriched in low complexity; that stretch reads AKAPSAARSLPSASTS. Residues 179 to 199 are disordered; that stretch reads AKAPSAARSLPSASTSKATIS. S199 carries the post-translational modification Phosphoserine. The short motif at 201–211 is the MIT-interacting motif element; the sequence is EEIERQLKALG.

The protein belongs to the SNF7 family. In terms of assembly, probable core component of the endosomal sorting required for transport complex III (ESCRT-III). ESCRT-III components are thought to multimerize to form a flat lattice on the perimeter membrane of the endosome. Several assembly forms of ESCRT-III may exist that interact and act sequentially. Interacts with CHMP2A. Interacts with VPS4A. Interacts with VPS4B; the interaction is direct. As to expression, in brain, it is expressed in all neuronal populations with a relatively enhanced expression in the hippocampus, frontal and temporal lobes and in both granule and Purkinje cells of the cerebellum. Not expressed in astrocytes or oligodendrocytes.

The protein resides in the cytoplasm. It is found in the cytosol. The protein localises to the late endosome membrane. Functionally, probable core component of the endosomal sorting required for transport complex III (ESCRT-III) which is involved in multivesicular bodies (MVBs) formation and sorting of endosomal cargo proteins into MVBs. MVBs contain intraluminal vesicles (ILVs) that are generated by invagination and scission from the limiting membrane of the endosome and mostly are delivered to lysosomes enabling degradation of membrane proteins, such as stimulated growth factor receptors, lysosomal enzymes and lipids. The MVB pathway appears to require the sequential function of ESCRT-O, -I,-II and -III complexes. ESCRT-III proteins mostly dissociate from the invaginating membrane before the ILV is released. The ESCRT machinery also functions in topologically equivalent membrane fission events, such as the terminal stages of cytokinesis. ESCRT-III proteins are believed to mediate the necessary vesicle extrusion and/or membrane fission activities, possibly in conjunction with the AAA ATPase VPS4. In Mus musculus (Mouse), this protein is Charged multivesicular body protein 2b (Chmp2b).